Reading from the N-terminus, the 223-residue chain is Receptor-transporting protein 2 (223 aa).

Topologically, residues 1-193 are cytoplasmic; that stretch reads MSTSLTTCEW…KKGQAGFISS (193 aa). A 3CxxC-type zinc finger spans residues 52–161; it reads ASGRFHCSWC…SEFCEACQEG (110 aa). Residues 194 to 216 form a helical membrane-spanning segment; the sequence is FFSFRWCLFWGTLCLVIVYLQFF. Over 217-223 the chain is Extracellular; that stretch reads RGRSGFL.

The protein belongs to the TMEM7 family. Interacts with olfactory receptors. As to expression, predominantly expressed in olfactory and vomeronasal organs, in mature olfactory sensory neurons.

The protein resides in the cell membrane. Functionally, specifically promotes functional cell surface expression of olfactory receptors, but not of other GPCRs. The sequence is that of Receptor-transporting protein 2 (Rtp2) from Mus musculus (Mouse).